Reading from the N-terminus, the 367-residue chain is NADH-quinone oxidoreductase subunit D (367 aa).

It belongs to the complex I 49 kDa subunit family. In terms of assembly, NDH-1 is composed of 14 different subunits. Subunits NuoB, C, D, E, F, and G constitute the peripheral sector of the complex.

It localises to the cell membrane. The catalysed reaction is a quinone + NADH + 5 H(+)(in) = a quinol + NAD(+) + 4 H(+)(out). Functionally, NDH-1 shuttles electrons from NADH, via FMN and iron-sulfur (Fe-S) centers, to quinones in the respiratory chain. The immediate electron acceptor for the enzyme in this species is believed to be a menaquinone. Couples the redox reaction to proton translocation (for every two electrons transferred, four hydrogen ions are translocated across the cytoplasmic membrane), and thus conserves the redox energy in a proton gradient. This chain is NADH-quinone oxidoreductase subunit D, found in Geobacillus kaustophilus (strain HTA426).